Consider the following 448-residue polypeptide: Adenylosuccinate synthetase 1 (448 aa).

GTP is bound by residues 22 to 28 (GDEGKGK) and 50 to 52 (GHT). Asp23 acts as the Proton acceptor in catalysis. 2 residues coordinate Mg(2+): Asp23 and Gly50. IMP is bound by residues 23–26 (DEGK), 48–51 (NAGH), Thr139, Arg153, Gln234, Thr249, and Arg321. His51 serves as the catalytic Proton donor. Residue 317-323 (SVTGRPR) coordinates substrate. GTP-binding positions include Arg323, 349–351 (KLD), and 431–433 (STG).

Belongs to the adenylosuccinate synthetase family. As to quaternary structure, homodimer. Mg(2+) serves as cofactor.

It localises to the cytoplasm. The catalysed reaction is IMP + L-aspartate + GTP = N(6)-(1,2-dicarboxyethyl)-AMP + GDP + phosphate + 2 H(+). Its pathway is purine metabolism; AMP biosynthesis via de novo pathway; AMP from IMP: step 1/2. Its function is as follows. Plays an important role in the de novo pathway of purine nucleotide biosynthesis. Catalyzes the first committed step in the biosynthesis of AMP from IMP. The protein is Adenylosuccinate synthetase 1 of Burkholderia lata (strain ATCC 17760 / DSM 23089 / LMG 22485 / NCIMB 9086 / R18194 / 383).